The chain runs to 233 residues: Lipoprotein-releasing system ATP-binding protein LolD (233 aa).

Residues 6-233 (LQCDNLCKRY…TAELSLMGAE (228 aa)) form the ABC transporter domain. 42–49 (GSSGSGKS) lines the ATP pocket.

It belongs to the ABC transporter superfamily. Lipoprotein translocase (TC 3.A.1.125) family. As to quaternary structure, the complex is composed of two ATP-binding proteins (LolD) and two transmembrane proteins (LolC and LolE).

The protein resides in the cell inner membrane. In terms of biological role, part of the ABC transporter complex LolCDE involved in the translocation of mature outer membrane-directed lipoproteins, from the inner membrane to the periplasmic chaperone, LolA. Responsible for the formation of the LolA-lipoprotein complex in an ATP-dependent manner. This is Lipoprotein-releasing system ATP-binding protein LolD from Shigella flexneri.